Reading from the N-terminus, the 45-residue chain is Photosystem II reaction center protein K (45 aa).

Positions 1 to 8 (MNSALFLA) are excised as a propeptide. A helical membrane pass occupies residues 23 to 43 (ILPVIPVFFLLLAFVWQAAIG).

This sequence belongs to the PsbK family. In terms of assembly, PSII is composed of 1 copy each of membrane proteins PsbA, PsbB, PsbC, PsbD, PsbE, PsbF, PsbH, PsbI, PsbJ, PsbK, PsbL, PsbM, PsbT, PsbX, PsbY, PsbZ, Psb30/Ycf12, at least 3 peripheral proteins of the oxygen-evolving complex and a large number of cofactors. It forms dimeric complexes.

The protein resides in the plastid. It localises to the chloroplast thylakoid membrane. Its function is as follows. One of the components of the core complex of photosystem II (PSII). PSII is a light-driven water:plastoquinone oxidoreductase that uses light energy to abstract electrons from H(2)O, generating O(2) and a proton gradient subsequently used for ATP formation. It consists of a core antenna complex that captures photons, and an electron transfer chain that converts photonic excitation into a charge separation. In Pyropia yezoensis (Susabi-nori), this protein is Photosystem II reaction center protein K.